Consider the following 155-residue polypeptide: 6,7-dimethyl-8-ribityllumazine synthase (155 aa).

Residues Phe-23, 57–59 (AFE), and 81–83 (AVI) each bind 5-amino-6-(D-ribitylamino)uracil. 86 to 87 (AT) is a (2S)-2-hydroxy-3-oxobutyl phosphate binding site. His-89 acts as the Proton donor in catalysis. Phe-114 provides a ligand contact to 5-amino-6-(D-ribitylamino)uracil. (2S)-2-hydroxy-3-oxobutyl phosphate is bound at residue Arg-128.

The protein belongs to the DMRL synthase family.

It catalyses the reaction (2S)-2-hydroxy-3-oxobutyl phosphate + 5-amino-6-(D-ribitylamino)uracil = 6,7-dimethyl-8-(1-D-ribityl)lumazine + phosphate + 2 H2O + H(+). It participates in cofactor biosynthesis; riboflavin biosynthesis; riboflavin from 2-hydroxy-3-oxobutyl phosphate and 5-amino-6-(D-ribitylamino)uracil: step 1/2. In terms of biological role, catalyzes the formation of 6,7-dimethyl-8-ribityllumazine by condensation of 5-amino-6-(D-ribitylamino)uracil with 3,4-dihydroxy-2-butanone 4-phosphate. This is the penultimate step in the biosynthesis of riboflavin. The polypeptide is 6,7-dimethyl-8-ribityllumazine synthase (Geotalea daltonii (strain DSM 22248 / JCM 15807 / FRC-32) (Geobacter daltonii)).